The primary structure comprises 278 residues: Protein EXORDIUM-like 4 (278 aa).

The signal sequence occupies residues 1–23 (MAYNYRFAILLVLLSATVGFTAA). The N-linked (GlcNAc...) asparagine glycan is linked to Asn35.

This sequence belongs to the EXORDIUM family.

It is found in the secreted. Its subcellular location is the extracellular space. It localises to the apoplast. Functionally, may play a role in a brassinosteroid-dependent regulation of growth and development. The chain is Protein EXORDIUM-like 4 (EXL4) from Arabidopsis thaliana (Mouse-ear cress).